The sequence spans 260 residues: Intermembrane phospholipid transport system permease protein MlaE (260 aa).

Over 1-50 (MLLNALASLGHKGIKTLRTFGRAGLMLFNALVGKPEFRKHAPLLVRQLYN) the chain is Cytoplasmic. The helical transmembrane segment at 51–71 (VGVLSMLIIVVSGVFIGMVLG) threads the bilayer. Residues 72–88 (LQGYLVLTTYSAETSLG) lie on the Periplasmic side of the membrane. The helical transmembrane segment at 89 to 109 (MLVALSLLRELGPVVAALLFA) threads the bilayer. The Cytoplasmic segment spans residues 110 to 147 (GRAGSALTAEIGLMRATEQLSSMEMMAVDPLRRVISPR). The chain crosses the membrane as a helical span at residues 148-168 (FWAGVISLPLLTVIFVAVGIW). Topologically, residues 169-198 (GGSLVGVSWKGIDSGFFWSAMQNAVDWRMD) are periplasmic. The helical transmembrane segment at 199–219 (LVNCLIKSVVFAITVTWISLF) threads the bilayer. Topologically, residues 220-238 (NGYDAIPTSAGISRATTRT) are cytoplasmic. Residues 239-259 (VVHSSLAVLGLDFVLTALMFG) form a helical membrane-spanning segment. Residue N260 is a topological domain, periplasmic.

It belongs to the MlaE permease family. As to quaternary structure, the complex is composed of two ATP-binding proteins (MlaF), two transmembrane proteins (MlaE), two cytoplasmic solute-binding proteins (MlaB) and six periplasmic solute-binding proteins (MlaD).

It localises to the cell inner membrane. Part of the ABC transporter complex MlaFEDB, which is involved in a phospholipid transport pathway that maintains lipid asymmetry in the outer membrane by retrograde trafficking of phospholipids from the outer membrane to the inner membrane. Probably responsible for the translocation of the substrate across the membrane. In Escherichia coli O157:H7, this protein is Intermembrane phospholipid transport system permease protein MlaE.